An 89-amino-acid chain; its full sequence is Small ribosomal subunit protein uS15 (89 aa).

It belongs to the universal ribosomal protein uS15 family. As to quaternary structure, part of the 30S ribosomal subunit. Forms a bridge to the 50S subunit in the 70S ribosome, contacting the 23S rRNA.

Its function is as follows. One of the primary rRNA binding proteins, it binds directly to 16S rRNA where it helps nucleate assembly of the platform of the 30S subunit by binding and bridging several RNA helices of the 16S rRNA. Functionally, forms an intersubunit bridge (bridge B4) with the 23S rRNA of the 50S subunit in the ribosome. The chain is Small ribosomal subunit protein uS15 from Chlamydia pneumoniae (Chlamydophila pneumoniae).